Reading from the N-terminus, the 262-residue chain is Acyl-[acyl-carrier-protein]--UDP-N-acetylglucosamine O-acyltransferase (262 aa).

This sequence belongs to the transferase hexapeptide repeat family. LpxA subfamily. As to quaternary structure, homotrimer.

The protein resides in the cytoplasm. It catalyses the reaction a (3R)-hydroxyacyl-[ACP] + UDP-N-acetyl-alpha-D-glucosamine = a UDP-3-O-[(3R)-3-hydroxyacyl]-N-acetyl-alpha-D-glucosamine + holo-[ACP]. It functions in the pathway glycolipid biosynthesis; lipid IV(A) biosynthesis; lipid IV(A) from (3R)-3-hydroxytetradecanoyl-[acyl-carrier-protein] and UDP-N-acetyl-alpha-D-glucosamine: step 1/6. In terms of biological role, involved in the biosynthesis of lipid A, a phosphorylated glycolipid that anchors the lipopolysaccharide to the outer membrane of the cell. The polypeptide is Acyl-[acyl-carrier-protein]--UDP-N-acetylglucosamine O-acyltransferase (Salmonella paratyphi B (strain ATCC BAA-1250 / SPB7)).